Reading from the N-terminus, the 196-residue chain is Molybdenum cofactor guanylyltransferase (196 aa).

GTP contacts are provided by residues 14–16, lysine 27, aspartate 73, and aspartate 106; that span reads LAG. Mg(2+) is bound at residue aspartate 106.

The protein belongs to the MobA family. Monomer. It depends on Mg(2+) as a cofactor.

The protein resides in the cytoplasm. The catalysed reaction is Mo-molybdopterin + GTP + H(+) = Mo-molybdopterin guanine dinucleotide + diphosphate. Transfers a GMP moiety from GTP to Mo-molybdopterin (Mo-MPT) cofactor (Moco or molybdenum cofactor) to form Mo-molybdopterin guanine dinucleotide (Mo-MGD) cofactor. This chain is Molybdenum cofactor guanylyltransferase, found in Acidiphilium cryptum (strain JF-5).